The following is a 221-amino-acid chain: MKTAVIQFPGSNCDADALHAARLLLDDGAQFVWHTETALPEGTELVFLPGGFSYGDHLRSGAIAARSPIMNAVKAHAEAGGYVLGVCNGFQVLTEAGLLPGALSRNKELHFMCKPVHLRVENNATDFSRAYGPGQIIEIPIAHGEGNYYADAATIAELEEGGRVVFRYADNPNGSLNDIAGIVNERGNVLGMMPHPERAVELLLGSEDGKGVFESLKTVKK.

A Glutamine amidotransferase type-1 domain is found at 2 to 221; it reads KTAVIQFPGS…VFESLKTVKK (220 aa). Cysteine 87 (nucleophile) is an active-site residue. Residues histidine 195 and glutamate 197 contribute to the active site.

Part of the FGAM synthase complex composed of 1 PurL, 1 PurQ and 2 PurS subunits.

It localises to the cytoplasm. The enzyme catalyses N(2)-formyl-N(1)-(5-phospho-beta-D-ribosyl)glycinamide + L-glutamine + ATP + H2O = 2-formamido-N(1)-(5-O-phospho-beta-D-ribosyl)acetamidine + L-glutamate + ADP + phosphate + H(+). It carries out the reaction L-glutamine + H2O = L-glutamate + NH4(+). It functions in the pathway purine metabolism; IMP biosynthesis via de novo pathway; 5-amino-1-(5-phospho-D-ribosyl)imidazole from N(2)-formyl-N(1)-(5-phospho-D-ribosyl)glycinamide: step 1/2. Its function is as follows. Part of the phosphoribosylformylglycinamidine synthase complex involved in the purines biosynthetic pathway. Catalyzes the ATP-dependent conversion of formylglycinamide ribonucleotide (FGAR) and glutamine to yield formylglycinamidine ribonucleotide (FGAM) and glutamate. The FGAM synthase complex is composed of three subunits. PurQ produces an ammonia molecule by converting glutamine to glutamate. PurL transfers the ammonia molecule to FGAR to form FGAM in an ATP-dependent manner. PurS interacts with PurQ and PurL and is thought to assist in the transfer of the ammonia molecule from PurQ to PurL. This Deinococcus radiodurans (strain ATCC 13939 / DSM 20539 / JCM 16871 / CCUG 27074 / LMG 4051 / NBRC 15346 / NCIMB 9279 / VKM B-1422 / R1) protein is Phosphoribosylformylglycinamidine synthase subunit PurQ.